The sequence spans 326 residues: Cobalamin biosynthesis protein CobD (326 aa).

4 helical membrane-spanning segments follow: residues 58–78 (MRGV…GVVL), 81–101 (LFDV…AVFL), 157–177 (FSDG…PGLL), and 304–324 (VFYR…LPFL).

Belongs to the CobD/CbiB family.

Its subcellular location is the cell membrane. Its pathway is cofactor biosynthesis; adenosylcobalamin biosynthesis. Converts cobyric acid to cobinamide by the addition of aminopropanol on the F carboxylic group. The sequence is that of Cobalamin biosynthesis protein CobD from Sinorhizobium fredii (strain NBRC 101917 / NGR234).